We begin with the raw amino-acid sequence, 102 residues long: Small ribosomal subunit protein uS10 (102 aa).

Belongs to the universal ribosomal protein uS10 family. As to quaternary structure, part of the 30S ribosomal subunit.

In terms of biological role, involved in the binding of tRNA to the ribosomes. The polypeptide is Small ribosomal subunit protein uS10 (Pelobacter propionicus (strain DSM 2379 / NBRC 103807 / OttBd1)).